The following is a 132-amino-acid chain: Small ribosomal subunit protein uS8 (132 aa).

The protein belongs to the universal ribosomal protein uS8 family. As to quaternary structure, part of the 30S ribosomal subunit. Contacts proteins S5 and S12.

Functionally, one of the primary rRNA binding proteins, it binds directly to 16S rRNA central domain where it helps coordinate assembly of the platform of the 30S subunit. The polypeptide is Small ribosomal subunit protein uS8 (Xanthomonas campestris pv. campestris (strain 8004)).